Reading from the N-terminus, the 249-residue chain is Probable transcriptional regulatory protein Strop_1792 (249 aa).

The protein belongs to the TACO1 family.

Its subcellular location is the cytoplasm. In Salinispora tropica (strain ATCC BAA-916 / DSM 44818 / JCM 13857 / NBRC 105044 / CNB-440), this protein is Probable transcriptional regulatory protein Strop_1792.